We begin with the raw amino-acid sequence, 525 residues long: MMGKGFLDCESLVALQEMALHPIDLTASGCLSEERIQKNSLSVEGFTYSYATERVDDRCLEALQGLTEERELIKQMECMQQGAIMNRIEGFQSESRPVLHTATRAWVRDQDLHEEAAAIARHSKEEALRLAEFLYIARAKFSTLVQIGIGGSELGPKAMYFAMQGSCPSDKRIFFVSNIDPDNAAEVLREIDLEQTLVVVVSKSGTTLEPAANEELFRQAYQNKGLSIAEHFVAVTSQGSPMDDKSRYLEVFHLWDSIGGRFSATSMVGGVVLGFAFGYEAFIEFLQGAAAIDAHALTPKMRENLPLLSAMLGVWNRNLLGYPTTAVIPYSTGLKYFTAHLQQCGMESNGKSISREGKEISFRTSPIIWGDVGTNCQHSFFQSLHQGTDIVPVEFIGFLHNQRGLDCVLSGSSSSQKLFANLVAQSLALAQGRDNANPNKRFKGNSPSSILVAQQLSPRIAGSLLAFYEHKFAFQGFCWGINSFDQEGVSLGKELATQIIGIMSGNAPVEFPEARGVLRLFNVLT.

The active-site Proton donor is the Glu347. Residues His378 and Lys493 contribute to the active site.

It belongs to the GPI family.

The protein localises to the cytoplasm. It catalyses the reaction alpha-D-glucose 6-phosphate = beta-D-fructose 6-phosphate. It participates in carbohydrate biosynthesis; gluconeogenesis. It functions in the pathway carbohydrate degradation; glycolysis; D-glyceraldehyde 3-phosphate and glycerone phosphate from D-glucose: step 2/4. In terms of biological role, catalyzes the reversible isomerization of glucose-6-phosphate to fructose-6-phosphate. The polypeptide is Glucose-6-phosphate isomerase (Chlamydia trachomatis serovar L2 (strain ATCC VR-902B / DSM 19102 / 434/Bu)).